Here is a 370-residue protein sequence, read N- to C-terminus: Myomodulin neuropeptides 1 (370 aa).

The signal sequence occupies residues methionine 1–glutamine 18. A propeptide spanning residues glycine 19–alanine 50 is cleaved from the precursor. Residues glutamine 28–serine 40 show a composition bias toward low complexity. Residues glutamine 28 to arginine 52 form a disordered region. Leucine amide occurs at positions 60 and 69. Positions glycine 73–glutamate 190 are excised as a propeptide. Leucine amide occurs at positions 199 and 209. Positions glycine 210–glutamate 226 are enriched in basic and acidic residues. Residues glycine 210 to aspartate 230 form a disordered region. A propeptide spanning residues glutamate 213–isoleucine 237 is cleaved from the precursor. A leucine amide mark is found at leucine 246, leucine 256, leucine 266, leucine 276, leucine 286, leucine 296, leucine 306, leucine 316, leucine 326, leucine 336, and leucine 346. The disordered stretch occupies residues leucine 344–glutamine 370. The span at glycine 347–serine 358 shows a compositional bias: basic and acidic residues. A propeptide spanning residues aspartate 350–glutamate 355 is cleaved from the precursor. Residue leucine 364 is modified to Leucine amide. The propeptide occupies serine 368–glutamine 370.

In terms of tissue distribution, expressed in all ganglia of the CNS, but only in a subset of neurons including L10 in the abdominal ganglion and B16 in the buccal ganglion.

It localises to the secreted. Its function is as follows. Exogenous application of myomodulins potentiates ARC muscle contraction. This Aplysia californica (California sea hare) protein is Myomodulin neuropeptides 1 (MYOMOD1).